The chain runs to 605 residues: Class II receptor tyrosine kinase (605 aa).

The Ig-like C2-type domain maps to 1–67; it reads MWSSPGRNLE…DGESASFRVD (67 aa). Over 1-84 the chain is Extracellular; the sequence is MWSSPGRNLE…GSNSGVIAGV (84 aa). 3 N-linked (GlcNAc...) asparagine glycosylation sites follow: Asn26, Asn44, and Asn72. The helical transmembrane segment at 85–105 threads the bilayer; the sequence is LITLLLLIALIIILICVFWVV. At 106–605 the chain is on the cytoplasmic side; that stretch reads WRYRRRGKFD…GRPRGVAGCV (500 aa). The tract at residues 209-230 is disordered; sequence EELSPIQEKPTRRNTGLSTYSQ. A compositionally biased stretch (polar residues) spans 221 to 230; the sequence is RNTGLSTYSQ. The 260-residue stretch at 346-605 folds into the Protein kinase domain; it reads IREVKQIGVG…GRPRGVAGCV (260 aa). ATP-binding positions include 352–360 and Lys393; that span reads IGVGQFGAV. Asp496 (proton acceptor) is an active-site residue. Tyr527 bears the Phosphotyrosine; by autocatalysis mark.

Belongs to the protein kinase superfamily. Tyr protein kinase family. Insulin receptor subfamily. In terms of processing, phosphorylated.

It localises to the cell membrane. The catalysed reaction is L-tyrosyl-[protein] + ATP = O-phospho-L-tyrosyl-[protein] + ADP + H(+). This is Class II receptor tyrosine kinase (TK) from Geodia cydonium (Sponge).